Consider the following 455-residue polypeptide: Gastric inhibitory polypeptide receptor (455 aa).

The first 18 residues, 1 to 18, serve as a signal peptide directing secretion; that stretch reads MPLRLLLLLLWLWGLSLQ. The Extracellular segment spans residues 19-135; it reads RAETDSEGQT…DQKLILERLQ (117 aa). 3 disulfides stabilise this stretch: Cys-43–Cys-67, Cys-58–Cys-100, and Cys-81–Cys-115. N-linked (GlcNAc...) asparagine glycosylation is found at Asn-59, Asn-69, and Asn-74. Residues 136–158 traverse the membrane as a helical segment; it reads VVYTVGYSLSLATLLLALLILSL. Topologically, residues 159–166 are cytoplasmic; the sequence is FRRLHCTR. Residues 167 to 186 traverse the membrane as a helical segment; that stretch reads NYIHMNLFTSFMLRAGAILT. Over 187 to 214 the chain is Extracellular; that stretch reads RDQLLPPLGPYTGNQTPTLWNQALAACR. A helical transmembrane segment spans residues 215-239; sequence TAQILTQYCVGANYTWLLVEGVYLH. Topologically, residues 240 to 251 are cytoplasmic; sequence HLLVVVRRSEKG. A helical transmembrane segment spans residues 252–275; it reads HFRCYLLLGWGAPALFVIPWVIVR. Over 276–290 the chain is Extracellular; it reads YLYENTQCWERNEVK. The chain crosses the membrane as a helical span at residues 291–316; that stretch reads AIWWIIRTPILITILINFLIFIRILG. At 317–338 the chain is on the cytoplasmic side; the sequence is ILVSKLRTRQMRCPDYRLRLAR. The helical transmembrane segment at 339 to 359 threads the bilayer; sequence STLTLMPLLGVHEVVFAPVTE. The Extracellular segment spans residues 360–374; the sequence is EQAEGSLRFAKLAFE. The chain crosses the membrane as a helical span at residues 375-395; it reads IFLSSFQGFLVSVLYCFINKE. Over 396–455 the chain is Cytoplasmic; the sequence is VQSEIRRLRLSLQEQCPRPHLGQAPRAVPLSSAPQEAAIRNALPSGMLHVPGDEVLESYC.

It belongs to the G-protein coupled receptor 2 family. May form homodimers and heterodimers with GLP1R. In terms of processing, N-glycosylation is required for cell surface expression and lengthens receptor half-life by preventing degradation in the ER. Present in the pancreas as well as the gut, adipose tissue, heart, pituitary, and inner layers of the adrenal cortex, whereas it is not found in kidney, spleen, or liver. It is also expressed in several brain regions, including the cerebral cortex, hippocampus, and olfactory bulb.

It localises to the cell membrane. In terms of biological role, this is a receptor for GIP. The activity of this receptor is mediated by G proteins which activate adenylyl cyclase. The polypeptide is Gastric inhibitory polypeptide receptor (Gipr) (Rattus norvegicus (Rat)).